A 240-amino-acid chain; its full sequence is Uridylate kinase (240 aa).

13–16 contributes to the ATP binding site; sequence KFSG. UMP is bound at residue Gly-55. Residues Gly-56 and Arg-60 each contribute to the ATP site. UMP-binding positions include Asp-76 and 137–144; that span reads TGNPFFTT. ATP contacts are provided by Thr-164, Tyr-170, and Asp-173.

This sequence belongs to the UMP kinase family. As to quaternary structure, homohexamer.

Its subcellular location is the cytoplasm. The enzyme catalyses UMP + ATP = UDP + ADP. It functions in the pathway pyrimidine metabolism; CTP biosynthesis via de novo pathway; UDP from UMP (UMPK route): step 1/1. Its activity is regulated as follows. Inhibited by UTP. Catalyzes the reversible phosphorylation of UMP to UDP. The chain is Uridylate kinase from Helicobacter acinonychis (strain Sheeba).